The chain runs to 223 residues: Neurotrophic factor BDNF precursor form (223 aa).

An N-terminal signal peptide occupies residues serine 1–alanine 5. A propeptide spanning residues alanine 6–arginine 114 is cleaved from the precursor. N-linked (GlcNAc...) asparagine glycosylation is present at asparagine 107. Intrachain disulfides connect cysteine 127–cysteine 194 and cysteine 172–cysteine 223.

The protein belongs to the NGF-beta family.

The protein localises to the secreted. Functionally, promotes the survival of neuronal populations that are all located either in the central nervous system or directly connected to it. The polypeptide is Neurotrophic factor BDNF precursor form (BDNF) (Tropidophis haetianus (Haitian dwarf boa)).